The sequence spans 177 residues: Translation initiation factor IF-3 (177 aa).

It belongs to the IF-3 family. Monomer.

The protein localises to the cytoplasm. IF-3 binds to the 30S ribosomal subunit and shifts the equilibrium between 70S ribosomes and their 50S and 30S subunits in favor of the free subunits, thus enhancing the availability of 30S subunits on which protein synthesis initiation begins. The protein is Translation initiation factor IF-3 of Rhizobium meliloti (strain 1021) (Ensifer meliloti).